A 64-amino-acid chain; its full sequence is MGMRMMFTVFLLVVLATTVVSFPSDRASDGRDDEAKDERSDMHESDRKEICCNPACGPKYSCGR.

Residues 1-21 (MGMRMMFTVFLLVVLATTVVS) form the signal peptide. The propeptide occupies 22–49 (FPSDRASDGRDDEAKDERSDMHESDRKE). A disordered region spans residues 23 to 47 (PSDRASDGRDDEAKDERSDMHESDR). The span at 26-47 (RASDGRDDEAKDERSDMHESDR) shows a compositional bias: basic and acidic residues. Intrachain disulfides connect cysteine 51–cysteine 56 and cysteine 52–cysteine 62. Residue cysteine 62 is modified to Cysteine amide.

This sequence belongs to the conotoxin A superfamily. Expressed by the venom duct.

The protein localises to the secreted. In terms of biological role, alpha-conotoxins act on postsynaptic membranes, they bind to the nicotinic acetylcholine receptors (nAChR) and thus inhibit them. Is active on muscle nAChR (IC(50)=113 nM on adult subtype (alpha-1-beta-1-gamma-delta/CHRNA1-CHRNB1-CHRNG-CHRND) and IC(50)=142 nM on fetal subtype (alpha-1-beta-1-delta-epsilon/CHRNA1-CHRNB1-CHRND-CHRNE)). On mice muscle receptors, its higher affinity site is the alpha/delta nAChR subunit interface. On Torpedo receptors, it does not distinguish between alpha/delta and alpha/gamma acetylcholine-binding sites. In vivo, causes paralysis followed by death when injected into goldfish. In contrast, has no effect on mice, when similar doses are intraperitoneally or intracerebrally injected. This is Alpha-conotoxin SI from Conus striatus (Striated cone).